The following is a 282-amino-acid chain: Small-conductance mechanosensitive channel (282 aa).

Residues 1 to 23 (MWADIYHKLVEIYDIKAVKFLLD) lie on the Periplasmic side of the membrane. Residues 24–46 (VLKILIIAFIGIKFADFLIYRFY) form a helical membrane-spanning segment. Over 47–66 (KLYSKSKIQLPQRKIDTLTS) the chain is Cytoplasmic. The chain crosses the membrane as a helical span at residues 67 to 87 (LTKNAVRYIIYFLAGASILKL). Over 88-89 (FN) the chain is Periplasmic. The helical transmembrane segment at 90–110 (IDMTSLLAVAGIGSLAIGFGA) threads the bilayer. The Cytoplasmic segment spans residues 111 to 282 (QNLVKDMISG…TVILSEKKTN (172 aa)).

Belongs to the MscS (TC 1.A.23) family. Homoheptamer.

It is found in the cell inner membrane. Mechanosensitive ion channel that participates in the regulation of osmotic pressure changes within the cell, opening in response to stretch forces in the membrane lipid bilayer, without the need for other proteins. Has high selectivity for anions, and may contribute to resistance to hypoosmotic shock. The protein is Small-conductance mechanosensitive channel of Caldanaerobacter subterraneus subsp. tengcongensis (strain DSM 15242 / JCM 11007 / NBRC 100824 / MB4) (Thermoanaerobacter tengcongensis).